Consider the following 251-residue polypeptide: uncharacterized protein (251 aa).

This sequence belongs to the chlamydial CPn_0206/CT_203/TC_0475 family.

This is an uncharacterized protein from Chlamydia trachomatis serovar D (strain ATCC VR-885 / DSM 19411 / UW-3/Cx).